Reading from the N-terminus, the 253-residue chain is Triosephosphate isomerase (253 aa).

Residue 8-10 coordinates substrate; that stretch reads NWK. Catalysis depends on histidine 91, which acts as the Electrophile. The active-site Proton acceptor is glutamate 168. Substrate is bound by residues glycine 174, serine 213, and 234–235; that span reads GG.

Belongs to the triosephosphate isomerase family. Homodimer.

Its subcellular location is the cytoplasm. The enzyme catalyses D-glyceraldehyde 3-phosphate = dihydroxyacetone phosphate. It functions in the pathway carbohydrate biosynthesis; gluconeogenesis. It participates in carbohydrate degradation; glycolysis; D-glyceraldehyde 3-phosphate from glycerone phosphate: step 1/1. In terms of biological role, involved in the gluconeogenesis. Catalyzes stereospecifically the conversion of dihydroxyacetone phosphate (DHAP) to D-glyceraldehyde-3-phosphate (G3P). In Acidiphilium cryptum (strain JF-5), this protein is Triosephosphate isomerase.